The sequence spans 266 residues: Isoprenyl transferase (266 aa).

The active site involves Asp-36. Mg(2+) is bound at residue Asp-36. Substrate is bound by residues 37-40, Trp-41, Arg-49, His-53, and 81-83; these read GNGR and STE. Catalysis depends on Asn-84, which acts as the Proton acceptor. Residues Trp-85, Arg-87, Arg-204, and 210-212 contribute to the substrate site; that span reads RIS. Glu-223 provides a ligand contact to Mg(2+).

It belongs to the UPP synthase family. As to quaternary structure, homodimer. The cofactor is Mg(2+).

Functionally, catalyzes the condensation of isopentenyl diphosphate (IPP) with allylic pyrophosphates generating different type of terpenoids. This chain is Isoprenyl transferase, found in Prochlorococcus marinus (strain SARG / CCMP1375 / SS120).